Consider the following 397-residue polypeptide: Acetate kinase 2 (397 aa).

Position 10 (N10) interacts with Mg(2+). K17 contributes to the ATP binding site. R90 is a binding site for substrate. D147 functions as the Proton donor/acceptor in the catalytic mechanism. ATP-binding positions include 207–211 (HLGNG), 281–283 (DAR), and 329–333 (GIGEN). E385 contributes to the Mg(2+) binding site.

Belongs to the acetokinase family. In terms of assembly, homodimer. The cofactor is Mg(2+). Requires Mn(2+) as cofactor.

It localises to the cytoplasm. It carries out the reaction acetate + ATP = acetyl phosphate + ADP. The protein operates within metabolic intermediate biosynthesis; acetyl-CoA biosynthesis; acetyl-CoA from acetate: step 1/2. In terms of biological role, catalyzes the formation of acetyl phosphate from acetate and ATP. Can also catalyze the reverse reaction. This chain is Acetate kinase 2, found in Vibrio cholerae serotype O1 (strain ATCC 39315 / El Tor Inaba N16961).